Here is a 555-residue protein sequence, read N- to C-terminus: WRKY transcription factor WRKY24 (555 aa).

2 disordered regions span residues 133 to 183 (TAPA…AGAN) and 197 to 248 (SEMA…CTFP). Low complexity predominate over residues 163-183 (QQQQQPWGYQQQPAGMDAGAN). Residues 214-278 (SQRRSSDDGY…YKGTHNHAKP (65 aa)) constitute a DNA-binding region (WRKY 1). The Nuclear localization signal signature appears at 253–259 (KKKVERS). Positions 270 to 365 (KGTHNHAKPQ…DGEGISMAGN (96 aa)) are disordered. Composition is skewed to polar residues over residues 277–294 (KPQN…QVLQ) and 310–320 (TAATPENSSAS). Basic and acidic residues predominate over residues 347-356 (DSKRWRKDGD). The WRKY 2 DNA-binding region spans 379–444 (SDIDILDDGY…YEGKHNHDVP (66 aa)). The interval 466-555 (HPYLPNQPPP…DDMFFQNSLY (90 aa)) is transcription repression of gibberellic acid (GA)-induced promoters. Residues 514 to 555 (FDDARGSYMSQHQQQQRQNDAMHASRAKEEPGDDMFFQNSLY) form a disordered region.

Belongs to the WRKY group II-a family. In terms of tissue distribution, expressed in aleurone cells. Mostly expressed in aleurone layers and leaves, and, to a lower extent, in roots, panicles and embryos.

It is found in the nucleus. Its function is as follows. Transcription activator. Interacts specifically with the W box (5'-(T)TGAC[CT]-3'), a frequently occurring elicitor-responsive cis-acting element. Negative regulator of both gibberellic acid (GA) and abscisic acid (ABA) signaling in aleurone cells, probably by interfering with GAM1, via the specific repression of GA- and ABA-induced promoters. In Oryza sativa subsp. japonica (Rice), this protein is WRKY transcription factor WRKY24.